Reading from the N-terminus, the 385-residue chain is Queuine tRNA-ribosyltransferase (385 aa).

Asp92 (proton acceptor) is an active-site residue. Substrate contacts are provided by residues 92–96, Asp146, Gln188, and Gly215; that span reads DSGGF. Positions 246 to 252 are RNA binding; the sequence is GVGHPED. Residue Asp265 is the Nucleophile of the active site. Residues 270–274 are RNA binding; important for wobble base 34 recognition; it reads TRTGR. The Zn(2+) site is built by Cys303, Cys305, Cys308, and His334.

It belongs to the queuine tRNA-ribosyltransferase family. In terms of assembly, homodimer. Within each dimer, one monomer is responsible for RNA recognition and catalysis, while the other monomer binds to the replacement base PreQ1. The cofactor is Zn(2+).

It carries out the reaction 7-aminomethyl-7-carbaguanine + guanosine(34) in tRNA = 7-aminomethyl-7-carbaguanosine(34) in tRNA + guanine. It functions in the pathway tRNA modification; tRNA-queuosine biosynthesis. In terms of biological role, catalyzes the base-exchange of a guanine (G) residue with the queuine precursor 7-aminomethyl-7-deazaguanine (PreQ1) at position 34 (anticodon wobble position) in tRNAs with GU(N) anticodons (tRNA-Asp, -Asn, -His and -Tyr). Catalysis occurs through a double-displacement mechanism. The nucleophile active site attacks the C1' of nucleotide 34 to detach the guanine base from the RNA, forming a covalent enzyme-RNA intermediate. The proton acceptor active site deprotonates the incoming PreQ1, allowing a nucleophilic attack on the C1' of the ribose to form the product. After dissociation, two additional enzymatic reactions on the tRNA convert PreQ1 to queuine (Q), resulting in the hypermodified nucleoside queuosine (7-(((4,5-cis-dihydroxy-2-cyclopenten-1-yl)amino)methyl)-7-deazaguanosine). The chain is Queuine tRNA-ribosyltransferase from Thermus thermophilus (strain ATCC BAA-163 / DSM 7039 / HB27).